Here is a 212-residue protein sequence, read N- to C-terminus: GrpE protein homolog, mitochondrial (212 aa).

The protein belongs to the GrpE family. Component of the PAM complex, at least composed of mtHsp70, MGE1, TIM44, PAM16, PAM17 and PAM18.

It is found in the mitochondrion matrix. In terms of biological role, essential component of the PAM complex, a complex required for the translocation of transit peptide-containing proteins from the inner membrane into the mitochondrial matrix in an ATP-dependent manner. Seems to control the nucleotide-dependent binding of SSC1 to substrate proteins. This chain is GrpE protein homolog, mitochondrial (mge1), found in Eremothecium gossypii (strain ATCC 10895 / CBS 109.51 / FGSC 9923 / NRRL Y-1056) (Yeast).